A 549-amino-acid chain; its full sequence is Probable protein kinase UbiB (549 aa).

Residues 123–501 (DFDETPLASA…QQQAHKSNYL (379 aa)) form the Protein kinase domain. Residues 129–137 (LASASISQV) and K152 each bind ATP. The active-site Proton acceptor is D287. The next 2 helical transmembrane spans lie at 498–518 (SNYL…LFNQ) and 520–540 (ATLW…IIGW).

The protein belongs to the ABC1 family. UbiB subfamily.

It is found in the cell inner membrane. Its pathway is cofactor biosynthesis; ubiquinone biosynthesis [regulation]. In terms of biological role, is probably a protein kinase regulator of UbiI activity which is involved in aerobic coenzyme Q (ubiquinone) biosynthesis. The sequence is that of Probable protein kinase UbiB from Shewanella sp. (strain ANA-3).